The chain runs to 249 residues: Putative nicotinamide mononucleotide adenylyltransferase (249 aa).

Positions 40 and 41 each coordinate NAD(+). Position 48 (His48) interacts with ATP. Thr97, Gly129, Asp131, Arg165, and Asn206 together coordinate NAD(+). An ATP-binding site is contributed by 214–217; it reads TRAR.

Belongs to the eukaryotic NMN adenylyltransferase family. POF1 subfamily.

The protein localises to the cytoplasm. It is found in the nucleus. It carries out the reaction beta-nicotinamide D-ribonucleotide + ATP + H(+) = diphosphate + NAD(+). The protein operates within cofactor biosynthesis; NAD(+) biosynthesis; NAD(+) from nicotinamide D-ribonucleotide: step 1/1. Functionally, catalyzes the formation of NAD(+) from nicotinamide mononucleotide (NMN) and ATP. Involved in the salvage pathway for NAD(+) biosynthesis via NMN. In Schizosaccharomyces pombe (strain 972 / ATCC 24843) (Fission yeast), this protein is Putative nicotinamide mononucleotide adenylyltransferase.